The sequence spans 273 residues: Formamidopyrimidine-DNA glycosylase (273 aa).

The active-site Schiff-base intermediate with DNA is Pro-2. The Proton donor role is filled by Glu-3. Lys-58 (proton donor; for beta-elimination activity) is an active-site residue. DNA is bound by residues His-91 and Arg-110. The segment at 238 to 272 adopts an FPG-type zinc-finger fold; sequence QVYGKTGQPCPRCGCLIKKIKVGGRGTHYCPRCQC. Arg-262 serves as the catalytic Proton donor; for delta-elimination activity.

This sequence belongs to the FPG family. As to quaternary structure, monomer. The cofactor is Zn(2+).

It catalyses the reaction Hydrolysis of DNA containing ring-opened 7-methylguanine residues, releasing 2,6-diamino-4-hydroxy-5-(N-methyl)formamidopyrimidine.. The enzyme catalyses 2'-deoxyribonucleotide-(2'-deoxyribose 5'-phosphate)-2'-deoxyribonucleotide-DNA = a 3'-end 2'-deoxyribonucleotide-(2,3-dehydro-2,3-deoxyribose 5'-phosphate)-DNA + a 5'-end 5'-phospho-2'-deoxyribonucleoside-DNA + H(+). Its function is as follows. Involved in base excision repair of DNA damaged by oxidation or by mutagenic agents. Acts as a DNA glycosylase that recognizes and removes damaged bases. Has a preference for oxidized purines, such as 7,8-dihydro-8-oxoguanine (8-oxoG). Has AP (apurinic/apyrimidinic) lyase activity and introduces nicks in the DNA strand. Cleaves the DNA backbone by beta-delta elimination to generate a single-strand break at the site of the removed base with both 3'- and 5'-phosphates. The chain is Formamidopyrimidine-DNA glycosylase from Streptococcus agalactiae serotype Ia (strain ATCC 27591 / A909 / CDC SS700).